The chain runs to 2300 residues: Protein hobbit (2300 aa).

Residues 1-21 form the signal peptide; it reads MMLQLLLFCLALFIFVYWVLP. The interval 23–117 is transmembrane domain; it reads GISWYLVKRF…LRRTQTLAGK (95 aa). Disordered stretches follow at residues 269–290 and 2111–2148; these read TSTG…RSYD and VSDE…GKKG. The segment covering 270–282 has biased composition (polar residues); the sequence is STGQPSRRSTQGL. Residues 1750–2300 are required for endoplasmic reticulum-cell membrane contact sites location and binding to phosphatidylinositols; that stretch reads VVSETVGAFL…ASSGKRSGND (551 aa). Positions 2119–2140 are enriched in low complexity; sequence ASTSSASTTNLQAKSSTSSSTK.

Its subcellular location is the cell membrane. It localises to the endoplasmic reticulum membrane. The protein resides in the mitochondrion membrane. Tube-forming lipid transport protein which binds to phosphatidylinositols and affects phosphatidylinositol-4,5-bisphosphate (PtdIns-4,5-P2) distribution. In Drosophila melanogaster (Fruit fly), this protein is Protein hobbit.